A 761-amino-acid chain; its full sequence is Xaa-Pro dipeptidyl-peptidase (761 aa).

Residues Ser347, Asp467, and His497 each act as charge relay system in the active site.

It belongs to the peptidase S15 family. As to quaternary structure, homodimer.

The protein resides in the cytoplasm. It carries out the reaction Hydrolyzes Xaa-Pro-|- bonds to release unblocked, N-terminal dipeptides from substrates including Ala-Pro-|-p-nitroanilide and (sequentially) Tyr-Pro-|-Phe-Pro-|-Gly-Pro-|-Ile.. Removes N-terminal dipeptides sequentially from polypeptides having unsubstituted N-termini provided that the penultimate residue is proline. This Streptococcus agalactiae serotype V (strain ATCC BAA-611 / 2603 V/R) protein is Xaa-Pro dipeptidyl-peptidase.